We begin with the raw amino-acid sequence, 448 residues long: N-succinylarginine dihydrolase (448 aa).

Substrate contacts are provided by residues 19–28, N110, and 137–138; these read GGLSYGNVAS and HR. E174 is a catalytic residue. Position 214 (R214) interacts with substrate. H250 is an active-site residue. Residues D252 and N365 each contribute to the substrate site. C371 functions as the Nucleophile in the catalytic mechanism.

It belongs to the succinylarginine dihydrolase family. In terms of assembly, homodimer.

It carries out the reaction N(2)-succinyl-L-arginine + 2 H2O + 2 H(+) = N(2)-succinyl-L-ornithine + 2 NH4(+) + CO2. Its pathway is amino-acid degradation; L-arginine degradation via AST pathway; L-glutamate and succinate from L-arginine: step 2/5. In terms of biological role, catalyzes the hydrolysis of N(2)-succinylarginine into N(2)-succinylornithine, ammonia and CO(2). The polypeptide is N-succinylarginine dihydrolase (Pseudomonas syringae pv. syringae (strain B728a)).